The primary structure comprises 172 residues: Large ribosomal subunit protein uL10 (172 aa).

This sequence belongs to the universal ribosomal protein uL10 family. As to quaternary structure, part of the ribosomal stalk of the 50S ribosomal subunit. The N-terminus interacts with L11 and the large rRNA to form the base of the stalk. The C-terminus forms an elongated spine to which L12 dimers bind in a sequential fashion forming a multimeric L10(L12)X complex.

Its function is as follows. Forms part of the ribosomal stalk, playing a central role in the interaction of the ribosome with GTP-bound translation factors. The polypeptide is Large ribosomal subunit protein uL10 (Ruegeria pomeroyi (strain ATCC 700808 / DSM 15171 / DSS-3) (Silicibacter pomeroyi)).